The following is a 647-amino-acid chain: Dihydrolipoyllysine-residue acetyltransferase component of pyruvate dehydrogenase complex (647 aa).

The N-terminal 86 residues, 1–86, are a transit peptide targeting the mitochondrion; it reads MWRVCARRAQ…LWGSPSRRWY (86 aa). The Lipoyl-binding 1 domain occupies 91 to 167; sequence HQKVPLPSLS…PVGAIICITV (77 aa). S100 bears the Phosphoserine mark. K132 is subject to N6-lipoyllysine. The segment at 184 to 216 is disordered; the sequence is SAAPAPPAAPAPTPAAPAPSPTPSAQAPGSSYP. Residues 187-205 show a composition bias toward pro residues; sequence PAPPAAPAPTPAAPAPSPT. One can recognise a Lipoyl-binding 2 domain in the interval 218-294; it reads HMQVLLPALS…PLGTPLCIIV (77 aa). At K259 the chain carries N6-lipoyllysine. The disordered stretch occupies residues 311 to 352; the sequence is VTDLKPPAPPPIPSPAAPVPPAPQPVAPPPSAPRPAAPAGPK. The span at 316-348 shows a compositional bias: pro residues; that stretch reads PPAPPPIPSPAAPVPPAPQPVAPPPSAPRPAAP. Positions 356-393 constitute a Peripheral subunit-binding (PSBD) domain; sequence FVSPLAKKLAAEKGIDLTQVKGTGPDGRIIKKDIDSFV. R461 serves as a coordination point for CoA. K466 is subject to N6-acetyllysine. An N6-succinyllysine modification is found at K473. Position 475 (S475) interacts with CoA. K547 carries the post-translational modification N6-succinyllysine. S566, N567, and G591 together coordinate CoA. Catalysis depends on residues H620 and D624.

This sequence belongs to the 2-oxoacid dehydrogenase family. As to quaternary structure, part of the pyruvate dehydrogenase complex (PDHc) that is a multi-enzyme complex composed of multiple copies of three enzymes, pyruvate dehydrogenase (subunits PDH1A and PDHB, E1 component), dihydrolipoamide acetyltransferase (DLAT, E2 component), and dihydrolipoamide dehydrogenase (DLD, E3 component) to which is added an additional protein the E3-binding protein (PDHX, E3BP). In terms of structural architecture, the E2 and E3BP components assemble into a 60meric central core with icosahedral symmetry. The central core is decorated with E1 and E3 proteins. Currently, two alternative models for the E2:E3BP stoichiometry are considered as being either 48:12 (E2(48)-E3BP(12)) or 40:20 (E2(40)-E3BP(20)). Interacts with PDK2 and PDK3. Interacts with SIRT4. Interacts with PDHB. Requires (R)-lipoate as cofactor. Delipoylated at Lys-132 and Lys-259 by SIRT4, delipoylation decreases the PHD complex activity.

The protein localises to the mitochondrion matrix. The catalysed reaction is N(6)-[(R)-dihydrolipoyl]-L-lysyl-[protein] + acetyl-CoA = N(6)-[(R)-S(8)-acetyldihydrolipoyl]-L-lysyl-[protein] + CoA. Its function is as follows. As part of the pyruvate dehydrogenase complex, catalyzes the transfers of an acetyl group to a lipoic acid moiety. The pyruvate dehydrogenase complex, catalyzes the overall conversion of pyruvate to acetyl-CoA and CO(2), and thereby links cytoplasmic glycolysis and the mitochondrial tricarboxylic acid (TCA) cycle. This is Dihydrolipoyllysine-residue acetyltransferase component of pyruvate dehydrogenase complex from Bos taurus (Bovine).